The primary structure comprises 300 residues: Ribosomal protein L11 methyltransferase (300 aa).

Residues Thr152, Gly173, Asp195, and Asn234 each coordinate S-adenosyl-L-methionine.

The protein belongs to the methyltransferase superfamily. PrmA family.

Its subcellular location is the cytoplasm. The catalysed reaction is L-lysyl-[protein] + 3 S-adenosyl-L-methionine = N(6),N(6),N(6)-trimethyl-L-lysyl-[protein] + 3 S-adenosyl-L-homocysteine + 3 H(+). Functionally, methylates ribosomal protein L11. The sequence is that of Ribosomal protein L11 methyltransferase from Burkholderia cenocepacia (strain HI2424).